A 474-amino-acid polypeptide reads, in one-letter code: Phenylalanine--tRNA ligase alpha subunit (474 aa).

Residues T317, 356 to 358, and Y396 contribute to the L-phenylalanine site; that span reads QLE. E398 contributes to the Mg(2+) binding site. F421 contributes to the L-phenylalanine binding site.

The protein belongs to the class-II aminoacyl-tRNA synthetase family. Phe-tRNA synthetase alpha subunit type 2 subfamily. Tetramer of two alpha and two beta subunits. Mg(2+) is required as a cofactor.

The protein resides in the cytoplasm. It carries out the reaction tRNA(Phe) + L-phenylalanine + ATP = L-phenylalanyl-tRNA(Phe) + AMP + diphosphate + H(+). The sequence is that of Phenylalanine--tRNA ligase alpha subunit from Methanocorpusculum labreanum (strain ATCC 43576 / DSM 4855 / Z).